The primary structure comprises 425 residues: MTKALEGVRILDFTHVQSGPTCTQLLAWFGADVIKVERPGVGDITRGQLQDIPNVDSLYFTMLNHNKRSITLDTKNPKGKEVLTELIKKCDVLVENFGPGVLDRMGFPWEKIQAINPKMIVASIKGFGPGPYEDCKVYENVAQCTGGAASTTGFRDGLPLVTGAQIGDSGTGLHLALGIVTALYQRTHTGRGQRVTAAMQDGVLNLCRVKLRDQQRLDHGPLKEYSQFGEGVPFGDAVPRAGNDSGGGQPGRILKCKGWETDPNAYIYFITQAPVWEKICDVIGEPTWKTDPNYAKPAARLPRLNEIFGRIEQWTMTKTKFEAMDILNEFDIPCGPILSMKEIAEDESLRKTGTLVEVDHPTRGKYLSVGNPIKLSDSPADVTRSPLLGEHTDEILRQVLGFSDHQVAEIHDSGALDPPRKEAAE.

CoA contacts are provided by residues 17-18 (QS), Arg-38, 72-75 (LDTK), 96-98 (NFG), Arg-104, and 136-139 (KVYE). Asp-168 acts as the Nucleophile in catalysis. 247–249 (GGQ) provides a ligand contact to substrate.

It belongs to the CoA-transferase III family. Frc subfamily. Homodimer.

It catalyses the reaction formyl-CoA + oxalate = oxalyl-CoA + formate. Its pathway is metabolic intermediate degradation; oxalate degradation; CO(2) and formate from oxalate: step 1/2. In terms of biological role, involved in the catabolism of oxalate and in the adapatation to low pH via the induction of the oxalate-dependent acid tolerance response (ATR). Catalyzes the transfer of the CoA moiety from formyl-CoA to oxalate. The sequence is that of Formyl-CoA:oxalate CoA-transferase from Bradyrhizobium sp. (strain ORS 278).